A 383-amino-acid chain; its full sequence is tRNA(Met) cytidine acetate ligase (383 aa).

ATP contacts are provided by residues Ile-7–Leu-20, Gly-101, Asn-153, and Arg-178–Ile-179.

This sequence belongs to the TmcAL family.

The protein localises to the cytoplasm. The catalysed reaction is cytidine(34) in elongator tRNA(Met) + acetate + ATP = N(4)-acetylcytidine(34) in elongator tRNA(Met) + AMP + diphosphate. Its function is as follows. Catalyzes the formation of N(4)-acetylcytidine (ac(4)C) at the wobble position of elongator tRNA(Met), using acetate and ATP as substrates. First activates an acetate ion to form acetyladenylate (Ac-AMP) and then transfers the acetyl group to tRNA to form ac(4)C34. The polypeptide is tRNA(Met) cytidine acetate ligase (Lactobacillus helveticus (strain DPC 4571)).